The primary structure comprises 201 residues: Superoxide dismutase [Fe] (201 aa).

4 residues coordinate Fe cation: histidine 27, histidine 79, aspartate 161, and histidine 165.

This sequence belongs to the iron/manganese superoxide dismutase family. Homodimer. Requires Fe cation as cofactor.

It carries out the reaction 2 superoxide + 2 H(+) = H2O2 + O2. Functionally, destroys superoxide anion radicals which are normally produced within the cells and which are toxic to biological systems. This is Superoxide dismutase [Fe] (sodB) from Synechococcus elongatus (strain ATCC 33912 / PCC 7942 / FACHB-805) (Anacystis nidulans R2).